The following is a 398-amino-acid chain: Tryptophan synthase beta chain (398 aa).

An N6-(pyridoxal phosphate)lysine modification is found at K90.

It belongs to the TrpB family. In terms of assembly, tetramer of two alpha and two beta chains. Pyridoxal 5'-phosphate serves as cofactor.

It carries out the reaction (1S,2R)-1-C-(indol-3-yl)glycerol 3-phosphate + L-serine = D-glyceraldehyde 3-phosphate + L-tryptophan + H2O. Its pathway is amino-acid biosynthesis; L-tryptophan biosynthesis; L-tryptophan from chorismate: step 5/5. In terms of biological role, the beta subunit is responsible for the synthesis of L-tryptophan from indole and L-serine. The sequence is that of Tryptophan synthase beta chain from Anoxybacillus flavithermus (strain DSM 21510 / WK1).